A 351-amino-acid polypeptide reads, in one-letter code: Anthranilate phosphoribosyltransferase (351 aa).

Residues glycine 80, 83-84, threonine 88, 90-93, 108-116, and serine 120 each bind 5-phospho-alpha-D-ribose 1-diphosphate; these read GD, NIST, and KHGNRSVTS. Residue glycine 80 coordinates anthranilate. Position 92 (serine 92) interacts with Mg(2+). Asparagine 111 lines the anthranilate pocket. Residue arginine 166 participates in anthranilate binding. Aspartate 229 and glutamate 230 together coordinate Mg(2+).

This sequence belongs to the anthranilate phosphoribosyltransferase family. As to quaternary structure, homodimer. Mg(2+) serves as cofactor.

It carries out the reaction N-(5-phospho-beta-D-ribosyl)anthranilate + diphosphate = 5-phospho-alpha-D-ribose 1-diphosphate + anthranilate. The protein operates within amino-acid biosynthesis; L-tryptophan biosynthesis; L-tryptophan from chorismate: step 2/5. Functionally, catalyzes the transfer of the phosphoribosyl group of 5-phosphorylribose-1-pyrophosphate (PRPP) to anthranilate to yield N-(5'-phosphoribosyl)-anthranilate (PRA). This is Anthranilate phosphoribosyltransferase from Chlorobium chlorochromatii (strain CaD3).